The following is a 245-amino-acid chain: 1-(5-phosphoribosyl)-5-[(5-phosphoribosylamino)methylideneamino] imidazole-4-carboxamide isomerase (245 aa).

The active-site Proton acceptor is the Asp-7. The Proton donor role is filled by Asp-129.

Belongs to the HisA/HisF family.

It is found in the cytoplasm. It catalyses the reaction 1-(5-phospho-beta-D-ribosyl)-5-[(5-phospho-beta-D-ribosylamino)methylideneamino]imidazole-4-carboxamide = 5-[(5-phospho-1-deoxy-D-ribulos-1-ylimino)methylamino]-1-(5-phospho-beta-D-ribosyl)imidazole-4-carboxamide. It participates in amino-acid biosynthesis; L-histidine biosynthesis; L-histidine from 5-phospho-alpha-D-ribose 1-diphosphate: step 4/9. This is 1-(5-phosphoribosyl)-5-[(5-phosphoribosylamino)methylideneamino] imidazole-4-carboxamide isomerase from Yersinia pestis bv. Antiqua (strain Antiqua).